The following is a 248-amino-acid chain: Triosephosphate isomerase (248 aa).

9 to 11 (NWK) is a binding site for substrate. H94 serves as the catalytic Electrophile. E166 (proton acceptor) is an active-site residue. Substrate-binding positions include G172, S212, and 233–234 (GG).

It belongs to the triosephosphate isomerase family. Homodimer.

It localises to the cytoplasm. The enzyme catalyses D-glyceraldehyde 3-phosphate = dihydroxyacetone phosphate. The protein operates within carbohydrate biosynthesis; gluconeogenesis. It participates in carbohydrate degradation; glycolysis; D-glyceraldehyde 3-phosphate from glycerone phosphate: step 1/1. In terms of biological role, involved in the gluconeogenesis. Catalyzes stereospecifically the conversion of dihydroxyacetone phosphate (DHAP) to D-glyceraldehyde-3-phosphate (G3P). The chain is Triosephosphate isomerase from Clostridium beijerinckii (strain ATCC 51743 / NCIMB 8052) (Clostridium acetobutylicum).